Consider the following 901-residue polypeptide: Protein translocase subunit SecA (901 aa).

ATP is bound by residues glutamine 85, 103-107 (GEGKT), and aspartate 510. A disordered region spans residues 847 to 901 (TRINQNNLPVDENSQTTQNSETEDYSDRRIGRNEPCPCGSGKKYKHCHGSRVARQ). A compositionally biased stretch (polar residues) spans 848 to 866 (RINQNNLPVDENSQTTQNS). The Zn(2+) site is built by cysteine 882, cysteine 884, cysteine 893, and histidine 894. Basic residues predominate over residues 888-901 (KKYKHCHGSRVARQ).

It belongs to the SecA family. Monomer and homodimer. Part of the essential Sec protein translocation apparatus which comprises SecA, SecYEG and auxiliary proteins SecDF-YajC and YidC. Requires Zn(2+) as cofactor.

The protein resides in the cell inner membrane. It localises to the cytoplasm. The catalysed reaction is ATP + H2O + cellular proteinSide 1 = ADP + phosphate + cellular proteinSide 2.. Part of the Sec protein translocase complex. Interacts with the SecYEG preprotein conducting channel. Has a central role in coupling the hydrolysis of ATP to the transfer of proteins into and across the cell membrane, serving both as a receptor for the preprotein-SecB complex and as an ATP-driven molecular motor driving the stepwise translocation of polypeptide chains across the membrane. This Haemophilus influenzae (strain PittGG) protein is Protein translocase subunit SecA.